The primary structure comprises 709 residues: Coiled-coil domain-containing protein 13 (709 aa).

Coiled coils occupy residues 70–97, 139–178, and 206–288; these read IFEK…NGRL, ELSK…ASAK, and EVKA…QRQN. S258 carries the phosphoserine modification. A disordered region spans residues 281 to 312; sequence KQLGQRQNKPAGSSSSEVPLSSDSRKMTAQEK. Residues 293–302 show a composition bias toward low complexity; that stretch reads SSSSEVPLSS. Residues 323–457 adopt a coiled-coil conformation; that stretch reads DKQESWEKLA…ELEIGQLSVQ (135 aa). 3 disordered regions span residues 462–499, 512–542, and 600–641; these read KGGG…LGSS, SALT…QAQA, and KMRL…SSTQ. 2 positions are modified to phosphoserine: S469 and S532. A coiled-coil region spans residues 539 to 604; sequence QAQAAEMKAL…EQHLEKMRLE (66 aa).

Interacts with PCM1, CEP290 and PCNT.

The protein localises to the cytoplasm. Its subcellular location is the cytoskeleton. It localises to the microtubule organizing center. It is found in the centrosome. The protein resides in the centriolar satellite. The protein localises to the cilium basal body. In terms of biological role, required for primary cilia formation and promotes the localization of the ciliopathy protein BBS4 to both centriolar satellites and cilia. The chain is Coiled-coil domain-containing protein 13 from Mus musculus (Mouse).